The following is a 423-amino-acid chain: T-box transcription factor T-A (423 aa).

The T-box DNA-binding region spans 44–212 (LWTKFKELTN…HNPFAKAFLD (169 aa)). Positions 215–227 (ERSDHKEVPDHST) are enriched in basic and acidic residues. Disordered regions lie at residues 215–234 (ERSDHKEVPDHSTDNQQSGY) and 280–304 (AAPYPSHYSHRSTTTNNYMDNSSGS). A compositionally biased stretch (polar residues) spans 290 to 304 (RSTTTNNYMDNSSGS).

As to quaternary structure, monomer. Binds DNA as a monomer. First expressed at the dorsal side of the blastula embryo. Expressed in the germ ring, shield and chordamesoderm during gastrulation and is restricted to the notochord and tailbud during somitogenesis (at protein level).

It localises to the nucleus. Its function is as follows. Involved in the transcriptional regulation of genes required for mesoderm differentiation, including itself. Indispensable for the formation of the notochord and the tail structure. Functions together with tbx16/spadetail in development of trunk and tail mesoderm. Functions by itself early in development to repress medial floor plate and promote notochord fate but at later times, functions together with tbx16/spadetail to promote medial floor plate formation. Acts in a parallel pathway to, but cooperates with, non-canonical wnt-signaling during tail formation. Required for the morphogenesis of Kupffer's vesicle and regulates left-right asymmetry. The protein is T-box transcription factor T-A (tbxta) of Danio rerio (Zebrafish).